We begin with the raw amino-acid sequence, 303 residues long: Porphobilinogen deaminase (303 aa).

Position 241 is an S-(dipyrrolylmethanemethyl)cysteine (Cys241).

The protein belongs to the HMBS family. Monomer. It depends on dipyrromethane as a cofactor.

It carries out the reaction 4 porphobilinogen + H2O = hydroxymethylbilane + 4 NH4(+). The protein operates within porphyrin-containing compound metabolism; protoporphyrin-IX biosynthesis; coproporphyrinogen-III from 5-aminolevulinate: step 2/4. It participates in porphyrin-containing compound metabolism; chlorophyll biosynthesis. Tetrapolymerization of the monopyrrole PBG into the hydroxymethylbilane pre-uroporphyrinogen in several discrete steps. This Roseiflexus castenholzii (strain DSM 13941 / HLO8) protein is Porphobilinogen deaminase.